The following is an 88-amino-acid chain: Small ribosomal subunit protein bS20 (88 aa).

The interval 1-25 is disordered; it reads MANTPSAKKAARKIERRTAVNRARR.

It belongs to the bacterial ribosomal protein bS20 family.

In terms of biological role, binds directly to 16S ribosomal RNA. The chain is Small ribosomal subunit protein bS20 from Azorhizobium caulinodans (strain ATCC 43989 / DSM 5975 / JCM 20966 / LMG 6465 / NBRC 14845 / NCIMB 13405 / ORS 571).